The primary structure comprises 449 residues: Chitobiosyldiphosphodolichol beta-mannosyltransferase (449 aa).

The Lumenal portion of the chain corresponds to 1 to 7 (MFLEIPR). Residues 8–28 (WLLALIILYLSIPLVVYYVIP) traverse the membrane as a helical segment. A Dolichol recognition motif is present at residues 21–32 (LVVYYVIPYLFY). At 29–104 (YLFYGNKSTK…SNLKRKGGGT (76 aa)) the chain is on the cytoplasmic side. Residues 105 to 125 (SVIFMVKKVLFQVLSIFKLLW) constitute an intramembrane region (helical). Topologically, residues 126-449 (ELRGSDYILV…RTMRDLKLIH (324 aa)) are cytoplasmic. The required for oligomerization stretch occupies residues 435 to 449 (QSNWERTMRDLKLIH).

This sequence belongs to the glycosyltransferase group 1 family. Glycosyltransferase 33 subfamily. In terms of assembly, homodimer. ALG1 forms mannosyltransferases (MT) heteromeric complexes with either ALG2 or ALG11.

The protein resides in the endoplasmic reticulum membrane. The catalysed reaction is an N,N'-diacetylchitobiosyl-diphospho-di-trans,poly-cis-dolichol + GDP-alpha-D-mannose = a beta-D-Man-(1-&gt;4)-beta-D-GlcNAc-(1-&gt;4)-alpha-D-GlcNAc-diphospho-di-trans,poly-cis-dolichol + GDP + H(+). It functions in the pathway protein modification; protein glycosylation. Participates in the formation of the lipid-linked precursor oligosaccharide for N-glycosylation. Involved in assembling the dolichol-pyrophosphate-GlcNAc(2)-Man(5) intermediate on the cytoplasmic surface of the ER. The chain is Chitobiosyldiphosphodolichol beta-mannosyltransferase (ALG1) from Saccharomyces cerevisiae (strain ATCC 204508 / S288c) (Baker's yeast).